Consider the following 258-residue polypeptide: 1-(5-phosphoribosyl)-5-[(5-phosphoribosylamino)methylideneamino] imidazole-4-carboxamide isomerase (258 aa).

D9 functions as the Proton acceptor in the catalytic mechanism. Catalysis depends on D131, which acts as the Proton donor.

The protein belongs to the HisA/HisF family.

It localises to the cytoplasm. The enzyme catalyses 1-(5-phospho-beta-D-ribosyl)-5-[(5-phospho-beta-D-ribosylamino)methylideneamino]imidazole-4-carboxamide = 5-[(5-phospho-1-deoxy-D-ribulos-1-ylimino)methylamino]-1-(5-phospho-beta-D-ribosyl)imidazole-4-carboxamide. It functions in the pathway amino-acid biosynthesis; L-histidine biosynthesis; L-histidine from 5-phospho-alpha-D-ribose 1-diphosphate: step 4/9. This chain is 1-(5-phosphoribosyl)-5-[(5-phosphoribosylamino)methylideneamino] imidazole-4-carboxamide isomerase, found in Salinibacter ruber (strain DSM 13855 / M31).